Consider the following 154-residue polypeptide: Ribonuclease HI (154 aa).

Residues 1–142 (MPKQIEIFTD…CDELAKKGAE (142 aa)) form the RNase H type-1 domain. Residues Asp-10, Glu-48, Asp-70, and Asp-134 each coordinate Mg(2+).

It belongs to the RNase H family. In terms of assembly, monomer. The cofactor is Mg(2+).

It is found in the cytoplasm. It carries out the reaction Endonucleolytic cleavage to 5'-phosphomonoester.. Functionally, endonuclease that specifically degrades the RNA of RNA-DNA hybrids. The protein is Ribonuclease HI (rnhA) of Haemophilus influenzae (strain ATCC 51907 / DSM 11121 / KW20 / Rd).